Here is a 93-residue protein sequence, read N- to C-terminus: MQTAYWVMLMMMVCITAPLPEGGKPNSGIRGLVPNDLTPQHTLRSLISRRQTDVLLDATLLTTPAPEQRLFCFWKSCTWRPYPWRRRDLNGKR.

The first 18 residues, 1–18 (MQTAYWVMLMMMVCITAP), serve as a signal peptide directing secretion. Residues 19–69 (LPEGGKPNSGIRGLVPNDLTPQHTLRSLISRRQTDVLLDATLLTTPAPEQR) constitute a propeptide that is removed on maturation. A disulfide bond links C72 and C77. W74 is subject to D-tryptophan. Positions 79 to 93 (WRPYPWRRRDLNGKR) are excised as a propeptide.

This sequence belongs to the conotoxin C superfamily. Consomatin family. Expressed by the venom duct.

It localises to the secreted. In terms of biological role, moderately activates human somatostatin receptors (SSTR) with a preferential activation of SSTR1 and SSTR4. In vivo, does not cause behavioral changes in mice within a few minutes of intracranial injection, but causes a progressive loss of movement thereafter. Four to five hours after injection, mice recover, even with the highest dose tested. Shows antinociception and antihyperalgesia activities in two mouse models of acute pain, most probably by acting outside the central nervous system. This is Consomatin G2 from Conus geographus (Geography cone).